The chain runs to 96 residues: Protein RnfH (96 aa).

Belongs to the UPF0125 (RnfH) family.

This Klebsiella pneumoniae (strain 342) protein is Protein RnfH.